A 658-amino-acid chain; its full sequence is Gametogenetin (658 aa).

Disordered stretches follow at residues 1-268 (MGNV…ASGG) and 285-584 (KQGP…SNKG). A compositionally biased stretch (basic and acidic residues) spans 14-30 (SRKEQASDRASDSRRTP). Low complexity predominate over residues 54 to 83 (PGSSGPPGLLIPPESQASSSTLPLTLELPS). The interaction with GGNBP1 stretch occupies residues 127 to 491 (RGLLEASHRG…APTPPSTLSP (365 aa)). Residues 163-188 (PAPPPTPLEPRKQLPPAPSTCDPQPP) are compositionally biased toward pro residues. The segment covering 194 to 204 (LASSATSPTES) has biased composition (polar residues). Residues 252 to 264 (SSSGPLAAKASLG) are compositionally biased toward low complexity. The residue at position 384 (Ser-384) is a Phosphoserine. A compositionally biased stretch (low complexity) spans 398–409 (PRRPTPALLAPP). A compositionally biased stretch (pro residues) spans 423 to 460 (RPVPPSPQQIPPLPPPPPTPPATPPPAPPPTPQPPALP). A compositionally biased stretch (low complexity) spans 489-516 (LSPTAAAEQAPAPTPAPVTSQVPATTTA). The interval 496–658 (EQAPAPTPAP…HYDLQATHST (163 aa)) is interactions with ZNF403/GGNBP2 and OAZ3. The span at 527-536 (IRTRRNKGPR) shows a compositional bias: basic residues.

Interacts with FANCL, GGNBP1 and ZNF403/GGNBP2.

Its function is as follows. May be involved in spermatogenesis. This Rattus norvegicus (Rat) protein is Gametogenetin (Ggn).